A 342-amino-acid chain; its full sequence is Succinoglycan biosynthesis protein ExoU (342 aa).

It belongs to the glycosyltransferase 2 family.

It localises to the cytoplasm. It participates in glycan metabolism; exopolysaccharide biosynthesis. Glycosyltransferase required for the synthesis of succinoglycan (EPS I). Needed for the addition of the sixth sugar (glucose), catalyzes the formation of a beta-1,6 linkage between the fifth and sixth sugar. The protein is Succinoglycan biosynthesis protein ExoU (exoU) of Rhizobium meliloti (strain 1021) (Ensifer meliloti).